The following is a 172-amino-acid chain: Phosphopantetheine adenylyltransferase (172 aa).

Ser-9 contacts substrate. ATP is bound by residues 9 to 10 (SF) and His-17. Substrate-binding residues include Lys-41, Leu-78, and Arg-92. ATP-binding positions include 93–95 (GLR), Glu-103, and 128–134 (GRAITST).

The protein belongs to the bacterial CoaD family. As to quaternary structure, homohexamer. Requires Mg(2+) as cofactor.

It localises to the cytoplasm. The catalysed reaction is (R)-4'-phosphopantetheine + ATP + H(+) = 3'-dephospho-CoA + diphosphate. It participates in cofactor biosynthesis; coenzyme A biosynthesis; CoA from (R)-pantothenate: step 4/5. Reversibly transfers an adenylyl group from ATP to 4'-phosphopantetheine, yielding dephospho-CoA (dPCoA) and pyrophosphate. This Bartonella quintana (strain Toulouse) (Rochalimaea quintana) protein is Phosphopantetheine adenylyltransferase.